The primary structure comprises 153 residues: Transcriptional repressor NrdR (153 aa).

The segment at 3-34 (CPFCHNQDTRVIDSRAAEEGTAIRRRRSCPAC) is a zinc-finger region. In terms of domain architecture, ATP-cone spans 46–136 (LMVTKRSGAT…VYRSFESLED (91 aa)).

It belongs to the NrdR family. Zn(2+) is required as a cofactor.

Negatively regulates transcription of bacterial ribonucleotide reductase nrd genes and operons by binding to NrdR-boxes. This Thermobifida fusca (strain YX) protein is Transcriptional repressor NrdR.